Here is a 95-residue protein sequence, read N- to C-terminus: Aspartyl/glutamyl-tRNA(Asn/Gln) amidotransferase subunit C (95 aa).

Belongs to the GatC family. In terms of assembly, heterotrimer of A, B and C subunits.

The enzyme catalyses L-glutamyl-tRNA(Gln) + L-glutamine + ATP + H2O = L-glutaminyl-tRNA(Gln) + L-glutamate + ADP + phosphate + H(+). It carries out the reaction L-aspartyl-tRNA(Asn) + L-glutamine + ATP + H2O = L-asparaginyl-tRNA(Asn) + L-glutamate + ADP + phosphate + 2 H(+). Functionally, allows the formation of correctly charged Asn-tRNA(Asn) or Gln-tRNA(Gln) through the transamidation of misacylated Asp-tRNA(Asn) or Glu-tRNA(Gln) in organisms which lack either or both of asparaginyl-tRNA or glutaminyl-tRNA synthetases. The reaction takes place in the presence of glutamine and ATP through an activated phospho-Asp-tRNA(Asn) or phospho-Glu-tRNA(Gln). This is Aspartyl/glutamyl-tRNA(Asn/Gln) amidotransferase subunit C from Chlorobium chlorochromatii (strain CaD3).